Reading from the N-terminus, the 1032-residue chain is GPI inositol-deacylase (1032 aa).

Asparagine 12 is a glycosylation site (N-linked (GlcNAc...) asparagine). The helical transmembrane segment at 15-35 (ILTLVSFFGLVLFYLTWYLYT) threads the bilayer. Residue serine 195 is part of the active site. Asparagine 520 and asparagine 555 each carry an N-linked (GlcNAc...) asparagine glycan. Transmembrane regions (helical) follow at residues 703 to 723 (LATISFCVSIILLALVFQVKH) and 740 to 760 (ICSPWVFGSILFTLSILTPIM). Asparagine 784 is a glycosylation site (N-linked (GlcNAc...) asparagine). The next 3 helical transmembrane spans lie at 805–825 (LWFIGPVFFVMGLGIVSLTFY), 861–880 (WANRRIIGVLFVLLVIPIYM), and 884–903 (FAYVVSCIIQSIQVIKILVA). N-linked (GlcNAc...) asparagine glycosylation occurs at asparagine 907. A helical membrane pass occupies residues 916–936 (SLLMLMLWVLPINVPILVVFV). Residues asparagine 938 and asparagine 942 are each glycosylated (N-linked (GlcNAc...) asparagine). A run of 2 helical transmembrane segments spans residues 943–963 (WTTPFSSHHNFLAILPVILLM) and 985–1005 (AFLAYYVFYCLVYGIRHTYWI).

Belongs to the GPI inositol-deacylase family.

It localises to the endoplasmic reticulum membrane. Functionally, involved in inositol deacylation of GPI-anchored proteins which plays important roles in the quality control and ER-associated degradation of GPI-anchored proteins. The protein is GPI inositol-deacylase (BST1) of Debaryomyces hansenii (strain ATCC 36239 / CBS 767 / BCRC 21394 / JCM 1990 / NBRC 0083 / IGC 2968) (Yeast).